We begin with the raw amino-acid sequence, 1087 residues long: Error-prone DNA polymerase 2 (1087 aa).

Residues 1033-1064 are disordered; sequence DGAFRPPTGRGDEFAHGSPGSADSRGKAPPGV.

It belongs to the DNA polymerase type-C family. DnaE2 subfamily.

The protein localises to the cytoplasm. It carries out the reaction DNA(n) + a 2'-deoxyribonucleoside 5'-triphosphate = DNA(n+1) + diphosphate. In terms of biological role, DNA polymerase involved in damage-induced mutagenesis and translesion synthesis (TLS). It is not the major replicative DNA polymerase. The protein is Error-prone DNA polymerase 2 of Rhizobium meliloti (strain 1021) (Ensifer meliloti).